The primary structure comprises 739 residues: Phosphoribosylformylglycinamidine synthase subunit PurL (739 aa).

The active site involves His-53. Residues Tyr-56 and Lys-95 each coordinate ATP. Glu-97 lines the Mg(2+) pocket. Substrate contacts are provided by residues 98-101 (SHNH) and Arg-120. The active-site Proton acceptor is the His-99. Asp-121 is a Mg(2+) binding site. A substrate-binding site is contributed by Gln-244. Position 274 (Asp-274) interacts with Mg(2+). 318-320 (ESQ) provides a ligand contact to substrate. Residues Asp-501 and Gly-538 each contribute to the ATP site. Asn-539 contributes to the Mg(2+) binding site. Ser-541 contacts substrate.

This sequence belongs to the FGAMS family. Monomer. Part of the FGAM synthase complex composed of 1 PurL, 1 PurQ and 2 PurS subunits.

It is found in the cytoplasm. It catalyses the reaction N(2)-formyl-N(1)-(5-phospho-beta-D-ribosyl)glycinamide + L-glutamine + ATP + H2O = 2-formamido-N(1)-(5-O-phospho-beta-D-ribosyl)acetamidine + L-glutamate + ADP + phosphate + H(+). It participates in purine metabolism; IMP biosynthesis via de novo pathway; 5-amino-1-(5-phospho-D-ribosyl)imidazole from N(2)-formyl-N(1)-(5-phospho-D-ribosyl)glycinamide: step 1/2. Part of the phosphoribosylformylglycinamidine synthase complex involved in the purines biosynthetic pathway. Catalyzes the ATP-dependent conversion of formylglycinamide ribonucleotide (FGAR) and glutamine to yield formylglycinamidine ribonucleotide (FGAM) and glutamate. The FGAM synthase complex is composed of three subunits. PurQ produces an ammonia molecule by converting glutamine to glutamate. PurL transfers the ammonia molecule to FGAR to form FGAM in an ATP-dependent manner. PurS interacts with PurQ and PurL and is thought to assist in the transfer of the ammonia molecule from PurQ to PurL. The polypeptide is Phosphoribosylformylglycinamidine synthase subunit PurL (Listeria monocytogenes serovar 1/2a (strain ATCC BAA-679 / EGD-e)).